Reading from the N-terminus, the 535-residue chain is CTP synthase (535 aa).

The amidoligase domain stretch occupies residues 1-267 (MTKYIFVTGG…DQIVCDHLKL (267 aa)). Ser13 contributes to the CTP binding site. UTP is bound at residue Ser13. 14 to 19 (SLGKGI) is a binding site for ATP. Tyr54 contributes to the L-glutamine binding site. Asp71 is a binding site for ATP. Mg(2+) is bound by residues Asp71 and Glu141. CTP contacts are provided by residues 148–150 (DIE), 188–193 (KTKPTQ), and Lys224. UTP contacts are provided by residues 188-193 (KTKPTQ) and Lys224. Position 240–242 (240–242 (RDA)) interacts with ATP. A Glutamine amidotransferase type-1 domain is found at 292–534 (KIALVGKYVE…VSASITNKES (243 aa)). Gly354 is an L-glutamine binding site. The Nucleophile; for glutamine hydrolysis role is filled by Cys381. L-glutamine contacts are provided by residues 382 to 385 (LGMQ), Glu405, and Arg462. Active-site residues include His507 and Glu509.

This sequence belongs to the CTP synthase family. In terms of assembly, homotetramer.

It carries out the reaction UTP + L-glutamine + ATP + H2O = CTP + L-glutamate + ADP + phosphate + 2 H(+). The enzyme catalyses L-glutamine + H2O = L-glutamate + NH4(+). The catalysed reaction is UTP + NH4(+) + ATP = CTP + ADP + phosphate + 2 H(+). It functions in the pathway pyrimidine metabolism; CTP biosynthesis via de novo pathway; CTP from UDP: step 2/2. With respect to regulation, allosterically activated by GTP, when glutamine is the substrate; GTP has no effect on the reaction when ammonia is the substrate. The allosteric effector GTP functions by stabilizing the protein conformation that binds the tetrahedral intermediate(s) formed during glutamine hydrolysis. Inhibited by the product CTP, via allosteric rather than competitive inhibition. Functionally, catalyzes the ATP-dependent amination of UTP to CTP with either L-glutamine or ammonia as the source of nitrogen. Regulates intracellular CTP levels through interactions with the four ribonucleotide triphosphates. This Bacillus mycoides (strain KBAB4) (Bacillus weihenstephanensis) protein is CTP synthase.